The primary structure comprises 263 residues: Phosphatidylglycerol--prolipoprotein diacylglyceryl transferase (263 aa).

A run of 4 helical transmembrane segments spans residues 10–30 (VAIT…LFGF), 56–76 (MVTY…ILFY), 91–111 (IWNG…AMWL), and 117–137 (GLGF…GLFF). An a 1,2-diacyl-sn-glycero-3-phospho-(1'-sn-glycerol)-binding site is contributed by Arg139. The next 3 membrane-spanning stretches (helical) occupy residues 171-191 (PSQL…LWVF), 199-219 (GHVS…VEFV), and 231-251 (FGWL…GLWL).

The protein belongs to the Lgt family.

It localises to the cell inner membrane. The catalysed reaction is L-cysteinyl-[prolipoprotein] + a 1,2-diacyl-sn-glycero-3-phospho-(1'-sn-glycerol) = an S-1,2-diacyl-sn-glyceryl-L-cysteinyl-[prolipoprotein] + sn-glycerol 1-phosphate + H(+). It participates in protein modification; lipoprotein biosynthesis (diacylglyceryl transfer). In terms of biological role, catalyzes the transfer of the diacylglyceryl group from phosphatidylglycerol to the sulfhydryl group of the N-terminal cysteine of a prolipoprotein, the first step in the formation of mature lipoproteins. This Nitratidesulfovibrio vulgaris (strain ATCC 29579 / DSM 644 / CCUG 34227 / NCIMB 8303 / VKM B-1760 / Hildenborough) (Desulfovibrio vulgaris) protein is Phosphatidylglycerol--prolipoprotein diacylglyceryl transferase.